Here is a 601-residue protein sequence, read N- to C-terminus: Glutathione-regulated potassium-efflux system protein KefB (601 aa).

The next 13 membrane-spanning stretches (helical) occupy residues 5-25, 29-49, 55-75, 87-107, 115-135, 152-172, 177-197, 207-227, 230-250, 261-281, 284-304, 326-346, and 356-376; these read DLLLAGVLFLFAAVVAVPLAA, IGAVLGYLLAGIAIGPWGLGF, EILHFSELGVVFLMFIIGLEL, IFGVGAAQVLFSAVILGGLLM, AAVIGGIGLAMSSTAMALQLM, VLLFQDLAVIPALALVPLLAG, HFDWMKVGMKVLAFVGMLIGG, FIAASGVREVFTAATLLLVLG, LFMDALGLSMALGTFIAGILL, IAIDPFKGLLLGLFFISVGMA, LGVLYTHLLWVVVSVAVLVAV, FAGVLSQGGEFAFVLFSTAAS, and ALLLVTVTLSMMTTPLLMKLI. In terms of domain architecture, RCK N-terminal spans 400 to 518; that stretch reads KPQVIVVGFG…QAGVTNFSRE (119 aa).

Belongs to the monovalent cation:proton antiporter 2 (CPA2) transporter (TC 2.A.37) family. KefB subfamily. In terms of assembly, interacts with the regulatory subunit KefG.

The protein resides in the cell inner membrane. In terms of biological role, pore-forming subunit of a potassium efflux system that confers protection against electrophiles. Catalyzes K(+)/H(+) antiport. This is Glutathione-regulated potassium-efflux system protein KefB from Enterobacter sp. (strain 638).